The following is a 380-amino-acid chain: MASLRKTHPLLKIANDALVDLPTPINISVWWNFGSLLGLCLIAQILTGLFLAMHYTADIATAFSSVAHICRDVNYGWLIRNLHANGASFFFICLYLHVGRGLYYGSYLYKETWNIGVVLLLLVMMTAFVGYVLPWGQMSFWGATVITNLLSAVPYVGNTLVQWIWGGFSVDNATLTRFFAFHFLFPFIIAAMVLLHLLFLHETGSSNPTGINSGADKIPFHPYFTYKDLFGFVILLLALSILTLFSPNLLGDPDNFIPANPLVTPPHIKPEWYFLFAYAILRSIPNKLGGVLALLASILILMVVPLLHTSKQRGLMFRPLTQILFWTLVADVAILTWIGGMPVEHPFITVGQVASVLYFALFLILIPATGWAENKALKWN.

A run of 4 helical transmembrane segments spans residues 33–53 (FGSLLGLCLIAQILTGLFLAM), 77–98 (WLIRNLHANGASFFFICLYLHV), 113–133 (WNIGVVLLLLVMMTAFVGYVL), and 178–198 (FFAFHFLFPFIIAAMVLLHLL). Positions 83 and 97 each coordinate heme b. Residues H182 and H196 each coordinate heme b. H201 serves as a coordination point for a ubiquinone. 4 helical membrane passes run 226–246 (YKDLFGFVILLLALSILTLFS), 288–308 (LGGVLALLASILILMVVPLLH), 320–340 (LTQILFWTLVADVAILTWIGG), and 347–367 (FITVGQVASVLYFALFLILIP).

This sequence belongs to the cytochrome b family. In terms of assembly, the cytochrome bc1 complex contains 3 respiratory subunits (MT-CYB, CYC1 and UQCRFS1), 2 core proteins (UQCRC1 and UQCRC2) and probably 6 low-molecular weight proteins. Heme b serves as cofactor.

The protein localises to the mitochondrion inner membrane. Component of the ubiquinol-cytochrome c reductase complex (complex III or cytochrome b-c1 complex) that is part of the mitochondrial respiratory chain. The b-c1 complex mediates electron transfer from ubiquinol to cytochrome c. Contributes to the generation of a proton gradient across the mitochondrial membrane that is then used for ATP synthesis. In Allocyttus niger (Black oreo dory), this protein is Cytochrome b (mt-cyb).